We begin with the raw amino-acid sequence, 481 residues long: Glutamyl-tRNA(Gln) amidotransferase subunit A (481 aa).

Residues Lys-78 and Ser-153 each act as charge relay system in the active site. Catalysis depends on Ser-177, which acts as the Acyl-ester intermediate.

It belongs to the amidase family. GatA subfamily. As to quaternary structure, heterotrimer of A, B and C subunits.

The enzyme catalyses L-glutamyl-tRNA(Gln) + L-glutamine + ATP + H2O = L-glutaminyl-tRNA(Gln) + L-glutamate + ADP + phosphate + H(+). Its function is as follows. Allows the formation of correctly charged Gln-tRNA(Gln) through the transamidation of misacylated Glu-tRNA(Gln) in organisms which lack glutaminyl-tRNA synthetase. The reaction takes place in the presence of glutamine and ATP through an activated gamma-phospho-Glu-tRNA(Gln). This is Glutamyl-tRNA(Gln) amidotransferase subunit A from Borrelia garinii subsp. bavariensis (strain ATCC BAA-2496 / DSM 23469 / PBi) (Borreliella bavariensis).